The chain runs to 474 residues: F420-non-reducing hydrogenase vhc subunit A (474 aa).

Ni(2+)-binding residues include Cys-61, Cys-64, Cys-445, and Cys-448.

This sequence belongs to the [NiFe]/[NiFeSe] hydrogenase large subunit family. The F420-non-reducing hydrogenase vhc is composed of three subunits; VhcA, VhcD and VhcG. Requires Ni(2+) as cofactor.

The polypeptide is F420-non-reducing hydrogenase vhc subunit A (vhcA) (Methanococcus voltae).